A 552-amino-acid polypeptide reads, in one-letter code: Dihydroxy-acid dehydratase (552 aa).

Residue D78 coordinates Mg(2+). [2Fe-2S] cluster is bound at residue C119. Mg(2+) is bound by residues D120 and K121. Residue K121 is modified to N6-carboxylysine. Residue C191 participates in [2Fe-2S] cluster binding. E442 provides a ligand contact to Mg(2+). S468 serves as the catalytic Proton acceptor.

It belongs to the IlvD/Edd family. Homodimer. [2Fe-2S] cluster serves as cofactor. Mg(2+) is required as a cofactor.

It carries out the reaction (2R)-2,3-dihydroxy-3-methylbutanoate = 3-methyl-2-oxobutanoate + H2O. The catalysed reaction is (2R,3R)-2,3-dihydroxy-3-methylpentanoate = (S)-3-methyl-2-oxopentanoate + H2O. It participates in amino-acid biosynthesis; L-isoleucine biosynthesis; L-isoleucine from 2-oxobutanoate: step 3/4. The protein operates within amino-acid biosynthesis; L-valine biosynthesis; L-valine from pyruvate: step 3/4. Functionally, functions in the biosynthesis of branched-chain amino acids. Catalyzes the dehydration of (2R,3R)-2,3-dihydroxy-3-methylpentanoate (2,3-dihydroxy-3-methylvalerate) into 2-oxo-3-methylpentanoate (2-oxo-3-methylvalerate) and of (2R)-2,3-dihydroxy-3-methylbutanoate (2,3-dihydroxyisovalerate) into 2-oxo-3-methylbutanoate (2-oxoisovalerate), the penultimate precursor to L-isoleucine and L-valine, respectively. This Clostridium botulinum (strain Alaska E43 / Type E3) protein is Dihydroxy-acid dehydratase.